Here is an 89-residue protein sequence, read N- to C-terminus: UPF0297 protein MGAS9429_Spy1808 (89 aa).

Belongs to the UPF0297 family.

The polypeptide is UPF0297 protein MGAS9429_Spy1808 (Streptococcus pyogenes serotype M12 (strain MGAS9429)).